The primary structure comprises 217 residues: ATP phosphoribosyltransferase (217 aa).

This sequence belongs to the ATP phosphoribosyltransferase family. Short subfamily. As to quaternary structure, heteromultimer composed of HisG and HisZ subunits.

It localises to the cytoplasm. The enzyme catalyses 1-(5-phospho-beta-D-ribosyl)-ATP + diphosphate = 5-phospho-alpha-D-ribose 1-diphosphate + ATP. It participates in amino-acid biosynthesis; L-histidine biosynthesis; L-histidine from 5-phospho-alpha-D-ribose 1-diphosphate: step 1/9. Its function is as follows. Catalyzes the condensation of ATP and 5-phosphoribose 1-diphosphate to form N'-(5'-phosphoribosyl)-ATP (PR-ATP). Has a crucial role in the pathway because the rate of histidine biosynthesis seems to be controlled primarily by regulation of HisG enzymatic activity. This is ATP phosphoribosyltransferase from Burkholderia multivorans (strain ATCC 17616 / 249).